We begin with the raw amino-acid sequence, 419 residues long: 3-isopropylmalate dehydratase large subunit (419 aa).

Residues cysteine 300, cysteine 360, and cysteine 363 each coordinate [4Fe-4S] cluster.

Belongs to the aconitase/IPM isomerase family. LeuC type 2 subfamily. In terms of assembly, heterodimer of LeuC and LeuD. It depends on [4Fe-4S] cluster as a cofactor.

The enzyme catalyses (2R,3S)-3-isopropylmalate = (2S)-2-isopropylmalate. The protein operates within amino-acid biosynthesis; L-leucine biosynthesis; L-leucine from 3-methyl-2-oxobutanoate: step 2/4. Catalyzes the isomerization between 2-isopropylmalate and 3-isopropylmalate, via the formation of 2-isopropylmaleate. The polypeptide is 3-isopropylmalate dehydratase large subunit (Acetivibrio thermocellus (strain ATCC 27405 / DSM 1237 / JCM 9322 / NBRC 103400 / NCIMB 10682 / NRRL B-4536 / VPI 7372) (Clostridium thermocellum)).